Here is a 169-residue protein sequence, read N- to C-terminus: Caltractin (169 aa).

The interval 1–24 is disordered; the sequence is MSYRKTVVSARRDQKKGRVGGLTE. 4 EF-hand domains span residues 25–60, 61–96, 98–133, and 134–169; these read EQKQ…LGFE, PKKE…KMGE, DSRE…LGEN, and LTDE…TSLF. Positions 38, 40, 42, 44, and 49 each coordinate Ca(2+). Residues Asp147, Asn149, Asp151, Gln153, and Glu158 each coordinate Ca(2+).

The protein belongs to the centrin family.

This calcium-binding protein is found in the basal body complexes (the functional homolog of the centrosome in animal cell). In mitotic cells it is specifically associated with the poles of the mitotic spindles at the sites of the duplicated basal body complexes. The sequence is that of Caltractin from Dunaliella salina (Green alga).